A 371-amino-acid polypeptide reads, in one-letter code: Opsin Rh1 (371 aa).

Residues 1–47 (MERYSTPLIGPSFAALTNGSVTDKVTPDMAHLVHPYWNQFPAMEPKW) are Extracellular-facing. N18 carries an N-linked (GlcNAc...) asparagine glycan. The helical transmembrane segment at 48–72 (AKFLAAYMVLIATISWCGNGVVIYI) threads the bilayer. At 73-84 (FSTTKSLRTPAN) the chain is on the cytoplasmic side. Residues 85-110 (LLVINLAISDFGIMITNTPMMGINLF) traverse the membrane as a helical segment. Topologically, residues 111–124 (YETWVLGPLMCDIY) are extracellular. The cysteines at positions 121 and 198 are disulfide-linked. Residues 125–144 (GGLGSAFGCSSILSMCMISL) form a helical membrane-spanning segment. The Cytoplasmic portion of the chain corresponds to 145–163 (DRYNVIVKGMAGQPMTIKL). Residues 164 to 187 (AIMKIALIWFMASIWTLAPVFGWS) traverse the membrane as a helical segment. Over 188–211 (RYVPEGNLTSCGIDYLERDWNPRS) the chain is Extracellular. The helical transmembrane segment at 212–239 (YLIFYSIFVYYLPLFLICYSYWFIIAAV) threads the bilayer. Residues 240–274 (SAHEKAMREQAKKMNVKSLRSSEDADKSAEGKLAK) lie on the Cytoplasmic side of the membrane. The helical transmembrane segment at 275-298 (VALVTISLWFMAWTPYTIINTLGL) threads the bilayer. Over 299 to 305 (FKYEGLT) the chain is Extracellular. A helical membrane pass occupies residues 306–330 (PLNTIWGACFAKSAACYNPIVYGIS). K317 bears the N6-(retinylidene)lysine mark. The Cytoplasmic segment spans residues 331-371 (HPKYGIALKEKCPCCVFGKVDDGKASDATSQATNNESETKA).

This sequence belongs to the G-protein coupled receptor 1 family. Opsin subfamily. Phosphorylated on some or all of the serine and threonine residues present in the C-terminal region.

It is found in the cell projection. It localises to the rhabdomere membrane. In terms of biological role, visual pigments are the light-absorbing molecules that mediate vision. They consist of an apoprotein, opsin, covalently linked to cis-retinal. This chain is Opsin Rh1 (NINAE), found in Calliphora vicina (Blue blowfly).